Reading from the N-terminus, the 182-residue chain is ATP-dependent protease subunit HslV (182 aa).

Residue T7 is part of the active site. Residues A166, C169, and T172 each coordinate Na(+).

It belongs to the peptidase T1B family. HslV subfamily. In terms of assembly, a double ring-shaped homohexamer of HslV is capped on each side by a ring-shaped HslU homohexamer. The assembly of the HslU/HslV complex is dependent on binding of ATP.

The protein localises to the cytoplasm. The catalysed reaction is ATP-dependent cleavage of peptide bonds with broad specificity.. Allosterically activated by HslU binding. Protease subunit of a proteasome-like degradation complex believed to be a general protein degrading machinery. In Albidiferax ferrireducens (strain ATCC BAA-621 / DSM 15236 / T118) (Rhodoferax ferrireducens), this protein is ATP-dependent protease subunit HslV.